We begin with the raw amino-acid sequence, 437 residues long: ATP-dependent RNA helicase RhlB (437 aa).

Residues 9–37 (QKFADLGLKPQVTEGLEKKGFEYCTPIQA) carry the Q motif motif. The Helicase ATP-binding domain occupies 40–219 (LPVLLTGQDI…FEHMHNPEHV (180 aa)). 53–60 (AQTGTGKT) is a binding site for ATP. Residues 165 to 168 (DEAD) carry the DEAD box motif. The 146-residue stretch at 245–390 (ALLQTLIEEE…VSDYDASALI (146 aa)) folds into the Helicase C-terminal domain. The segment at 395–437 (APLRMRAPRTQQRRTNTGGTRSGNRKPQGRRPRQPRQSAPKQS) is disordered. Residues 403 to 413 (RTQQRRTNTGG) are compositionally biased toward low complexity. Basic residues predominate over residues 417 to 428 (GNRKPQGRRPRQ).

This sequence belongs to the DEAD box helicase family. RhlB subfamily. Component of the RNA degradosome, which is a multiprotein complex involved in RNA processing and mRNA degradation.

It localises to the cytoplasm. The catalysed reaction is ATP + H2O = ADP + phosphate + H(+). In terms of biological role, DEAD-box RNA helicase involved in RNA degradation. Has RNA-dependent ATPase activity and unwinds double-stranded RNA. The sequence is that of ATP-dependent RNA helicase RhlB from Vibrio campbellii (strain ATCC BAA-1116).